A 540-amino-acid polypeptide reads, in one-letter code: Tyrosinase (540 aa).

An N-terminal signal peptide occupies residues 1 to 19; the sequence is MKSLFLSAVLLQFFETCWS. Over 20–480 the chain is Lumenal, melanosome; it reads QFPRPCANSE…LQQAQQIWQW (461 aa). Residue Asn87 is glycosylated (N-linked (GlcNAc...) asparagine). His182, His205, and His214 together coordinate Cu cation. N-linked (GlcNAc...) asparagine glycans are attached at residues Asn233, Asn293, and Asn340. Cu cation is bound by residues His366 and His370. Asn374 is a glycosylation site (N-linked (GlcNAc...) asparagine). His393 is a binding site for Cu cation. A helical transmembrane segment spans residues 481–501; that stretch reads LLGAGILGALIATIVAAVIVF. At 502–540 the chain is on the cytoplasmic side; sequence ARRKRRRNQKRKRAPSFGERQPLLQSSSEEGSSSYQTTL. Residues 511 to 540 form a disordered region; sequence KRKRAPSFGERQPLLQSSSEEGSSSYQTTL. Residues 527–540 are compositionally biased toward low complexity; it reads SSSEEGSSSYQTTL.

The protein belongs to the tyrosinase family. Cu(2+) serves as cofactor.

The protein resides in the melanosome membrane. It catalyses the reaction 2 L-dopa + O2 = 2 L-dopaquinone + 2 H2O. The catalysed reaction is L-tyrosine + O2 = L-dopaquinone + H2O. This is a copper-containing oxidase that functions in the formation of pigments such as melanins and other polyphenolic compounds. This Oryzias latipes (Japanese rice fish) protein is Tyrosinase (tyr).